Consider the following 133-residue polypeptide: Small ribosomal subunit protein uS8 (133 aa).

The protein belongs to the universal ribosomal protein uS8 family. Part of the 30S ribosomal subunit. Contacts proteins S5 and S12.

In terms of biological role, one of the primary rRNA binding proteins, it binds directly to 16S rRNA central domain where it helps coordinate assembly of the platform of the 30S subunit. This Trichodesmium erythraeum (strain IMS101) protein is Small ribosomal subunit protein uS8.